Here is a 327-residue protein sequence, read N- to C-terminus: Phenylalanine--tRNA ligase alpha subunit (327 aa).

E252 contacts Mg(2+).

This sequence belongs to the class-II aminoacyl-tRNA synthetase family. Phe-tRNA synthetase alpha subunit type 1 subfamily. Tetramer of two alpha and two beta subunits. Requires Mg(2+) as cofactor.

The protein localises to the cytoplasm. The catalysed reaction is tRNA(Phe) + L-phenylalanine + ATP = L-phenylalanyl-tRNA(Phe) + AMP + diphosphate + H(+). In Yersinia enterocolitica serotype O:8 / biotype 1B (strain NCTC 13174 / 8081), this protein is Phenylalanine--tRNA ligase alpha subunit.